The primary structure comprises 195 residues: Cytochrome c biogenesis ATP-binding export protein CcmA (195 aa).

Residues 1–195 enclose the ABC transporter domain; it reads MLSLHQLQFN…IKSAQILQLV (195 aa). 33 to 40 serves as a coordination point for ATP; the sequence is GANGSGKS.

It belongs to the ABC transporter superfamily. CcmA exporter (TC 3.A.1.107) family. As to quaternary structure, the complex is composed of two ATP-binding proteins (CcmA) and two transmembrane proteins (CcmB).

Its subcellular location is the cell inner membrane. The catalysed reaction is heme b(in) + ATP + H2O = heme b(out) + ADP + phosphate + H(+). Functionally, part of the ABC transporter complex CcmAB involved in the biogenesis of c-type cytochromes; once thought to export heme, this seems not to be the case, but its exact role is uncertain. Responsible for energy coupling to the transport system. The sequence is that of Cytochrome c biogenesis ATP-binding export protein CcmA from Rickettsia felis (strain ATCC VR-1525 / URRWXCal2) (Rickettsia azadi).